A 232-amino-acid polypeptide reads, in one-letter code: Glutathione S-transferase E14 (232 aa).

The GST N-terminal domain maps to 4-85; the sequence is PKPILYYDER…HLAEKFDEGG (82 aa). The GST C-terminal domain occupies 91-218; sequence EHAERMKVLN…RQTMESVGSF (128 aa).

It belongs to the GST superfamily. Epsilon family. As to expression, expressed in the adult ovary (at protein level).

The enzyme catalyses RX + glutathione = an S-substituted glutathione + a halide anion + H(+). Its function is as follows. Conjugation of reduced glutathione to a wide number of exogenous and endogenous hydrophobic electrophiles. Essential for ecdysteroid biosynthesis. May be involved in detoxification. This Drosophila melanogaster (Fruit fly) protein is Glutathione S-transferase E14.